The chain runs to 346 residues: [LysW]-lysine/[LysW]-ornithine hydrolase (346 aa).

His68 serves as a coordination point for Zn(2+). Residue Asp70 is part of the active site. Asp92 lines the Zn(2+) pocket. Glu122 functions as the Proton acceptor in the catalytic mechanism. 3 residues coordinate Zn(2+): Glu123, Glu146, and His317.

Belongs to the peptidase M20A family. LysK subfamily. Requires Zn(2+) as cofactor. Co(2+) is required as a cofactor.

The protein localises to the cytoplasm. It catalyses the reaction [amino-group carrier protein]-C-terminal-gamma-(L-lysyl)-L-glutamate + H2O = [amino-group carrier protein]-C-terminal-L-glutamate + L-lysine. The catalysed reaction is [amino-group carrier protein]-C-terminal-gamma-(L-ornithyl)-L-glutamate + H2O = [amino-group carrier protein]-C-terminal-L-glutamate + L-ornithine. It participates in amino-acid biosynthesis; L-lysine biosynthesis via AAA pathway; L-lysine from L-alpha-aminoadipate (Thermus route): step 5/5. It functions in the pathway amino-acid biosynthesis; L-arginine biosynthesis. In terms of biological role, catalyzes the release of L-lysine from [LysW]-gamma-L-lysine and the release of L-ornithine from [LysW]-L-ornithine. This is [LysW]-lysine/[LysW]-ornithine hydrolase from Saccharolobus solfataricus (strain ATCC 35092 / DSM 1617 / JCM 11322 / P2) (Sulfolobus solfataricus).